Reading from the N-terminus, the 545-residue chain is Chaperonin GroEL (545 aa).

ATP is bound by residues 29 to 32 (TLGP), Lys50, 86 to 90 (DGTTT), Gly415, and Asp495.

This sequence belongs to the chaperonin (HSP60) family. As to quaternary structure, forms a cylinder of 14 subunits composed of two heptameric rings stacked back-to-back. Interacts with the co-chaperonin GroES.

The protein localises to the cytoplasm. It catalyses the reaction ATP + H2O + a folded polypeptide = ADP + phosphate + an unfolded polypeptide.. In terms of biological role, together with its co-chaperonin GroES, plays an essential role in assisting protein folding. The GroEL-GroES system forms a nano-cage that allows encapsulation of the non-native substrate proteins and provides a physical environment optimized to promote and accelerate protein folding. This chain is Chaperonin GroEL, found in Bacteroides thetaiotaomicron (strain ATCC 29148 / DSM 2079 / JCM 5827 / CCUG 10774 / NCTC 10582 / VPI-5482 / E50).